The primary structure comprises 302 residues: Aspartate carbamoyltransferase catalytic subunit (302 aa).

Residues R53 and T54 each coordinate carbamoyl phosphate. Residue K82 coordinates L-aspartate. The carbamoyl phosphate site is built by R103, H131, and Q134. L-aspartate is bound by residues R164 and R223. Residues L260 and P261 each coordinate carbamoyl phosphate.

Belongs to the aspartate/ornithine carbamoyltransferase superfamily. ATCase family. As to quaternary structure, heterooligomer of catalytic and regulatory chains.

The enzyme catalyses carbamoyl phosphate + L-aspartate = N-carbamoyl-L-aspartate + phosphate + H(+). It functions in the pathway pyrimidine metabolism; UMP biosynthesis via de novo pathway; (S)-dihydroorotate from bicarbonate: step 2/3. In terms of biological role, catalyzes the condensation of carbamoyl phosphate and aspartate to form carbamoyl aspartate and inorganic phosphate, the committed step in the de novo pyrimidine nucleotide biosynthesis pathway. The protein is Aspartate carbamoyltransferase catalytic subunit of Methanococcus vannielii (strain ATCC 35089 / DSM 1224 / JCM 13029 / OCM 148 / SB).